Here is a 254-residue protein sequence, read N- to C-terminus: Tumor necrosis factor ligand superfamily member 9 (254 aa).

At 1-28 the chain is on the cytoplasmic side; sequence MEYASDASLDPEAPWPPAPRARACRVLP. The helical; Signal-anchor for type II membrane protein transmembrane segment at 29-49 threads the bilayer; the sequence is WALVAGLLLLLLLAAACAVFL. The Extracellular portion of the chain corresponds to 50–254; that stretch reads ACPWAVSGAR…PAGLPSPRSE (205 aa). One can recognise a THD domain in the interval 91–240; it reads MFAQLVAQNV…GATVLGLFRV (150 aa).

It belongs to the tumor necrosis factor family. Homotrimer. As to expression, expressed in brain, placenta, lung, skeletal muscle and kidney.

The protein localises to the membrane. Functionally, cytokine that binds to TNFRSF9. Induces the proliferation of activated peripheral blood T-cells. May have a role in activation-induced cell death (AICD). May play a role in cognate interactions between T-cells and B-cells/macrophages. The sequence is that of Tumor necrosis factor ligand superfamily member 9 (TNFSF9) from Homo sapiens (Human).